The following is a 224-amino-acid chain: uncharacterized protein (224 aa).

The first 17 residues, 1–17, serve as a signal peptide directing secretion; that stretch reads MFTILLYFLVLFWVTNA.

This is an uncharacterized protein from Caenorhabditis elegans.